Reading from the N-terminus, the 363-residue chain is Chorismate synthase (363 aa).

NADP(+) is bound by residues arginine 48 and arginine 54. FMN contacts are provided by residues 125–127 (RSS), 237–238 (NA), glycine 277, 292–296 (KPTSS), and arginine 318.

It belongs to the chorismate synthase family. As to quaternary structure, homotetramer. FMNH2 is required as a cofactor.

It catalyses the reaction 5-O-(1-carboxyvinyl)-3-phosphoshikimate = chorismate + phosphate. The protein operates within metabolic intermediate biosynthesis; chorismate biosynthesis; chorismate from D-erythrose 4-phosphate and phosphoenolpyruvate: step 7/7. Functionally, catalyzes the anti-1,4-elimination of the C-3 phosphate and the C-6 proR hydrogen from 5-enolpyruvylshikimate-3-phosphate (EPSP) to yield chorismate, which is the branch point compound that serves as the starting substrate for the three terminal pathways of aromatic amino acid biosynthesis. This reaction introduces a second double bond into the aromatic ring system. This Pseudomonas entomophila (strain L48) protein is Chorismate synthase.